The sequence spans 74 residues: Large ribosomal subunit protein bL31 (74 aa).

Zn(2+) is bound by residues Cys16, Cys18, Cys37, and Cys40.

It belongs to the bacterial ribosomal protein bL31 family. Type A subfamily. Part of the 50S ribosomal subunit. It depends on Zn(2+) as a cofactor.

Functionally, binds the 23S rRNA. This is Large ribosomal subunit protein bL31 from Nitrosomonas europaea (strain ATCC 19718 / CIP 103999 / KCTC 2705 / NBRC 14298).